A 327-amino-acid chain; its full sequence is GTP 3',8-cyclase (327 aa).

Residues 21–233 (SYGRRIRKLR…AKIQQKYSLK (213 aa)) form the Radical SAM core domain. Arg-30 is a binding site for GTP. [4Fe-4S] cluster is bound by residues Cys-37 and Cys-41. Position 43 (Tyr-43) interacts with S-adenosyl-L-methionine. Cys-44 contacts [4Fe-4S] cluster. Arg-79 contacts GTP. Gly-83 is an S-adenosyl-L-methionine binding site. GTP is bound at residue Thr-109. Ser-133 is an S-adenosyl-L-methionine binding site. Residue Lys-169 coordinates GTP. Residue Met-203 coordinates S-adenosyl-L-methionine. Residues Cys-265 and Cys-268 each contribute to the [4Fe-4S] cluster site. A GTP-binding site is contributed by 270–272 (RWR). Residue Cys-282 participates in [4Fe-4S] cluster binding.

This sequence belongs to the radical SAM superfamily. MoaA family. As to quaternary structure, monomer and homodimer. It depends on [4Fe-4S] cluster as a cofactor.

The catalysed reaction is GTP + AH2 + S-adenosyl-L-methionine = (8S)-3',8-cyclo-7,8-dihydroguanosine 5'-triphosphate + 5'-deoxyadenosine + L-methionine + A + H(+). The protein operates within cofactor biosynthesis; molybdopterin biosynthesis. Functionally, catalyzes the cyclization of GTP to (8S)-3',8-cyclo-7,8-dihydroguanosine 5'-triphosphate. In Synechocystis sp. (strain ATCC 27184 / PCC 6803 / Kazusa), this protein is GTP 3',8-cyclase.